The sequence spans 372 residues: N-acetylneuraminate-9-phosphate synthase (372 aa).

Positions 314–372 (SIVAARNLNKGYRLQLADMAIKVSEPSGLTAEDFLDLVGKELADNIGEDEPILGNSIIN) constitute an AFP-like domain.

It carries out the reaction aldehydo-N-acetyl-D-mannosamine 6-phosphate + phosphoenolpyruvate + H2O = N-acetylneuraminate 9-phosphate + phosphate. The enzyme catalyses aldehydo-D-mannose 6-phosphate + phosphoenolpyruvate + H2O = 3-deoxy-D-glycero-beta-D-galacto-non-2-ulopyranosonate 9-phosphate + phosphate. Catalyzes the condensation of phosphoenolpyruvate (PEP) and N-acetylmannosamine 6-phosphate (ManNAc-6-P) or D-mannose 6-phosphate (Man-6-P) to generate the phosphorylated forms of both the sialic acids N-acetylneuraminic acid (Neu5Ac) and deaminoneuraminic acid (KDN), respectively. Essential for biosynthesis of sialic acids in neurons of the central nervous system. This chain is N-acetylneuraminate-9-phosphate synthase, found in Drosophila melanogaster (Fruit fly).